The following is a 360-amino-acid chain: Photosystem II protein D1 (360 aa).

3 helical membrane-spanning segments follow: residues 29–46, 118–133, and 142–156; these read YIGW…TATT, HFLL…EWEF, and WISV…AASA. Position 118 (histidine 118) interacts with chlorophyll a. A pheophytin a-binding site is contributed by tryptophan 126. Residues aspartate 170 and glutamate 189 each contribute to the [CaMn4O5] cluster site. A helical membrane pass occupies residues 197–218; sequence FHQLGVAGVFGGSLFSAMHGSL. Histidine 198 contacts chlorophyll a. A quinone-binding positions include histidine 215 and 264–265; that span reads SF. Residue histidine 215 participates in Fe cation binding. Histidine 272 contacts Fe cation. Residues 274–288 traverse the membrane as a helical segment; that stretch reads FLGLWPVVGIWFTAL. Residues histidine 332, glutamate 333, aspartate 342, and alanine 344 each coordinate [CaMn4O5] cluster. A propeptide spanning residues 345 to 360 is cleaved from the precursor; the sequence is SGESLPVALTAPAVIG.

Belongs to the reaction center PufL/M/PsbA/D family. As to quaternary structure, PSII is composed of 1 copy each of membrane proteins PsbA, PsbB, PsbC, PsbD, PsbE, PsbF, PsbH, PsbI, PsbJ, PsbK, PsbL, PsbM, PsbT, PsbX, PsbY, PsbZ, Psb30/Ycf12, at least 3 peripheral proteins of the oxygen-evolving complex and a large number of cofactors. It forms dimeric complexes. It depends on The D1/D2 heterodimer binds P680, chlorophylls that are the primary electron donor of PSII, and subsequent electron acceptors. It shares a non-heme iron and each subunit binds pheophytin, quinone, additional chlorophylls, carotenoids and lipids. D1 provides most of the ligands for the Mn4-Ca-O5 cluster of the oxygen-evolving complex (OEC). There is also a Cl(-1) ion associated with D1 and D2, which is required for oxygen evolution. The PSII complex binds additional chlorophylls, carotenoids and specific lipids. as a cofactor. In terms of processing, tyr-161 forms a radical intermediate that is referred to as redox-active TyrZ, YZ or Y-Z. Post-translationally, C-terminally processed by CTPA; processing is essential to allow assembly of the oxygen-evolving complex and thus photosynthetic growth.

It localises to the plastid. Its subcellular location is the chloroplast thylakoid membrane. The catalysed reaction is 2 a plastoquinone + 4 hnu + 2 H2O = 2 a plastoquinol + O2. Its function is as follows. Photosystem II (PSII) is a light-driven water:plastoquinone oxidoreductase that uses light energy to abstract electrons from H(2)O, generating O(2) and a proton gradient subsequently used for ATP formation. It consists of a core antenna complex that captures photons, and an electron transfer chain that converts photonic excitation into a charge separation. The D1/D2 (PsbA/PsbD) reaction center heterodimer binds P680, the primary electron donor of PSII as well as several subsequent electron acceptors. The polypeptide is Photosystem II protein D1 (Guillardia theta (Cryptophyte)).